The sequence spans 446 residues: Adenylosuccinate synthetase (446 aa).

Residues 21 to 27 and 49 to 51 each bind GTP; these read GDEGKGK and GHT. Catalysis depends on aspartate 22, which acts as the Proton acceptor. Mg(2+) contacts are provided by aspartate 22 and glycine 49. Residues 22 to 25, 47 to 50, threonine 141, arginine 155, glutamine 236, threonine 251, and arginine 319 each bind IMP; these read DEGK and NAGH. The active-site Proton donor is the histidine 50. A substrate-binding site is contributed by 315 to 321; the sequence is VTTGRSR. Residues arginine 321, 347–349, and 429–431 each bind GTP; these read KLD and STS.

Belongs to the adenylosuccinate synthetase family. In terms of assembly, homodimer. Mg(2+) serves as cofactor.

The protein resides in the cytoplasm. The enzyme catalyses IMP + L-aspartate + GTP = N(6)-(1,2-dicarboxyethyl)-AMP + GDP + phosphate + 2 H(+). The protein operates within purine metabolism; AMP biosynthesis via de novo pathway; AMP from IMP: step 1/2. Its function is as follows. Plays an important role in the de novo pathway of purine nucleotide biosynthesis. Catalyzes the first committed step in the biosynthesis of AMP from IMP. In Polaromonas sp. (strain JS666 / ATCC BAA-500), this protein is Adenylosuccinate synthetase.